A 91-amino-acid chain; its full sequence is Protein LURE 1.6 (91 aa).

The first 20 residues, Met1–Ser20, serve as a signal peptide directing secretion. Disulfide bonds link Cys59/Cys76, Cys62/Cys83, and Cys66/Cys85.

This sequence belongs to the DEFL family. In terms of tissue distribution, expressed in the pistil. Detected in the synergid cells.

It is found in the secreted. Its function is as follows. Pollen tube attractants guiding pollen tubes to the ovular micropyle. The protein is Protein LURE 1.6 of Arabidopsis thaliana (Mouse-ear cress).